We begin with the raw amino-acid sequence, 317 residues long: tRNA dimethylallyltransferase (317 aa).

Residue 14 to 21 (GPTAVGKT) coordinates ATP. 16-21 (TAVGKT) provides a ligand contact to substrate. Residues 39 to 42 (DSMQ) form an interaction with substrate tRNA region.

The protein belongs to the IPP transferase family. Monomer. Mg(2+) is required as a cofactor.

It carries out the reaction adenosine(37) in tRNA + dimethylallyl diphosphate = N(6)-dimethylallyladenosine(37) in tRNA + diphosphate. Its function is as follows. Catalyzes the transfer of a dimethylallyl group onto the adenine at position 37 in tRNAs that read codons beginning with uridine, leading to the formation of N6-(dimethylallyl)adenosine (i(6)A). The chain is tRNA dimethylallyltransferase from Bacillus cereus (strain ATCC 14579 / DSM 31 / CCUG 7414 / JCM 2152 / NBRC 15305 / NCIMB 9373 / NCTC 2599 / NRRL B-3711).